A 1584-amino-acid chain; its full sequence is MSQDTDVVSVPILGKEAVFVGFNLERRVCDFLIENAKSSAYVIVTDTNIAPHYLEKYTTALSEAAKRHGVAPRILTRVIPPGETSKCRSMKAEIEDWMLSQSCTRDTVLVAMGGGVIGDMAGYVAATFMRGIRFIQLPTTLLAMVDSSIGGKTAIDTPNGKNLVGAFWQPLAVFADLNFLETLEPRQFINGMGEVIKTAAMWNEKDFCLLEQNPTVILEAVHRPRVPGQFKFENIRNLLQKIILASVRTKCEVVTLDEREGGLRNLLNFGHSIGHAYEAILFPQILHGECVSIGMVKELELSRYLGILKPNAVGRVTKCLMSYTLPVSVHDAHIKKYAGYKKCPVDKLIRIMAVDKKNQGLQKRVVILKAVGETYEKHATVVSDEDIRVVLSHDIQVSPFDNSVSDVVVTPPGSKSISNRALILAAMAKGTTKLTNMLHSDDTQVMMAALEELGAATFSWEDNGETLVVNGGGKFKTPSKELYLSNAGTAARFLTTVAALVGENEQGGEVVLTGNHRMKVRPIGPLVDALRANGCSISYLEREGSLPLKMIPQNGLRGGVIELAATVSSQYVSSILMCAPYAQEPVTLKLVGGKPISQLYVDMTIAMMKGFGVNVVKSETEAYTYHIPKANYTSPGDYEIESDASSATYPLAFAAITGTKCTVPNIGSASLQGDARFARDVLAPMGCTVEQTPTSTTVQGPPMGQLKPLESVDMETMTDAFLTATALAAVACNSSGNEHITRITGIANQRVKECNRIAAMVHELAKFGVKAGELEDGIFIHGQSYKDLKTPEEGIYTYDDHRVAMAFSILTLVTPKPTVILDKACVVKTWPYWWDVLRNSFKIKLAGVESKETVKSVKLTRSRASVILIGMRGAGKTTIGSIIAGQLNMKFLDLDQELEKKLNTTIPDLVNTRGWDDFRQEELQVLQEFIDTKSSDFVAACGGGIVETPAARELLCKYVKEGGIVLHIHRNLDQVLSYLSIDKSRPAYADRESTKNVYLRRHQWYLDCRSHDFVSPTIESGNVQSKLETSMSRFLRVVTGKSTWFEKAIQKPHSFFLSLTFPNINDAISFLPEAIIGCDAVELRADLLEDPNSTTGYPSVEFVAEQFATLRAAIDLPIIFTVRSKDQGGRFPNANESEAVELMLAALRWGVDVLDLELGWSTESLQAIYARKENTKIITSWHDTAQRCSWAQPDEWLQKLDMATAFGDVVKFVGIAKSMQDNFDLEKFRKSFKGYTNKPLIAINMGTVGQLSRVFNNVLTPVTSPALPYKAAPGQLSVRQIITALSLMGSISPKKFYLFGTPIQHSKSPILHKTCYDLTGLPYTYDLFETESVEGVKDVLSQPDFGGANVTIPYKLDILQYLDELSDEARFLGAVNTVVPISENGKRKLRGDNTDWRGIVRTFVRAGANNLNGKNALVIGAGGTSRAAIFAMHKLGAKNIYLLNRTLVNAEKVKAVFPEEYNVKVIDHTKQSEISEWTKLQVAAVVSTVPADRPLPESVSKVIDALLSEIPAQKKEQYVFLDMAYKPLNTPLMSVASKHGYTCINGLEVLLQQGLASFEIWTGLAVPFEHVFGLYMVLCAKEHN.

The segment at 1–384 (MSQDTDVVSV…YEKHATVVSD (384 aa)) is 3-dehydroquinate synthase. NAD(+)-binding positions include 46-48 (DTN), 83-86 (ETSK), 114-116 (GGV), and D119. 7-phospho-2-dehydro-3-deoxy-D-arabino-heptonate is bound at residue R130. 139–140 (TT) lines the NAD(+) pocket. 7-phospho-2-dehydro-3-deoxy-D-arabino-heptonate-binding residues include D146 and K152. K161 is an NAD(+) binding site. A 7-phospho-2-dehydro-3-deoxy-D-arabino-heptonate-binding site is contributed by N162. Residues 179 to 182 (FLET) and N190 contribute to the NAD(+) site. E194 provides a ligand contact to Zn(2+). 7-phospho-2-dehydro-3-deoxy-D-arabino-heptonate-binding positions include 194–197 (EVIK) and K250. The active-site Proton acceptor; for 3-dehydroquinate synthase activity is E260. Residues 264-268 (RNLLN) and H271 contribute to the 7-phospho-2-dehydro-3-deoxy-D-arabino-heptonate site. H271 contributes to the Zn(2+) binding site. Catalysis depends on H275, which acts as the Proton acceptor; for 3-dehydroquinate synthase activity. Positions 287 and 356 each coordinate 7-phospho-2-dehydro-3-deoxy-D-arabino-heptonate. H287 is a binding site for Zn(2+). The tract at residues 397–843 (VSPFDNSVSD…WDVLRNSFKI (447 aa)) is EPSP synthase. Catalysis depends on C825, which acts as the For EPSP synthase activity. Positions 863 to 1058 (RASVILIGMR…IQKPHSFFLS (196 aa)) are shikimate kinase. 870 to 877 (GMRGAGKT) serves as a coordination point for ATP. The tract at residues 1059-1280 (LTFPNINDAI…AAPGQLSVRQ (222 aa)) is 3-dehydroquinase. H1182 acts as the Proton acceptor; for 3-dehydroquinate dehydratase activity in catalysis. The Schiff-base intermediate with substrate; for 3-dehydroquinate dehydratase activity role is filled by K1211. The tract at residues 1293–1584 (PKKFYLFGTP…YMVLCAKEHN (292 aa)) is shikimate dehydrogenase.

In the N-terminal section; belongs to the sugar phosphate cyclases superfamily. Dehydroquinate synthase family. It in the 2nd section; belongs to the EPSP synthase family. The protein in the 3rd section; belongs to the shikimate kinase family. This sequence in the 4th section; belongs to the type-I 3-dehydroquinase family. In the C-terminal section; belongs to the shikimate dehydrogenase family. In terms of assembly, homodimer. Zn(2+) is required as a cofactor.

The protein localises to the cytoplasm. The catalysed reaction is 7-phospho-2-dehydro-3-deoxy-D-arabino-heptonate = 3-dehydroquinate + phosphate. It carries out the reaction 3-dehydroquinate = 3-dehydroshikimate + H2O. The enzyme catalyses shikimate + NADP(+) = 3-dehydroshikimate + NADPH + H(+). It catalyses the reaction shikimate + ATP = 3-phosphoshikimate + ADP + H(+). The catalysed reaction is 3-phosphoshikimate + phosphoenolpyruvate = 5-O-(1-carboxyvinyl)-3-phosphoshikimate + phosphate. The protein operates within metabolic intermediate biosynthesis; chorismate biosynthesis; chorismate from D-erythrose 4-phosphate and phosphoenolpyruvate: step 2/7. It functions in the pathway metabolic intermediate biosynthesis; chorismate biosynthesis; chorismate from D-erythrose 4-phosphate and phosphoenolpyruvate: step 3/7. Its pathway is metabolic intermediate biosynthesis; chorismate biosynthesis; chorismate from D-erythrose 4-phosphate and phosphoenolpyruvate: step 4/7. It participates in metabolic intermediate biosynthesis; chorismate biosynthesis; chorismate from D-erythrose 4-phosphate and phosphoenolpyruvate: step 5/7. The protein operates within metabolic intermediate biosynthesis; chorismate biosynthesis; chorismate from D-erythrose 4-phosphate and phosphoenolpyruvate: step 6/7. In terms of biological role, the AROM polypeptide catalyzes 5 consecutive enzymatic reactions in prechorismate polyaromatic amino acid biosynthesis. The polypeptide is Pentafunctional AROM polypeptide (Schizosaccharomyces japonicus (strain yFS275 / FY16936) (Fission yeast)).